A 99-amino-acid chain; its full sequence is Small ribosomal subunit protein bS20 (99 aa).

Belongs to the bacterial ribosomal protein bS20 family.

In terms of biological role, binds directly to 16S ribosomal RNA. In Thermomicrobium roseum (strain ATCC 27502 / DSM 5159 / P-2), this protein is Small ribosomal subunit protein bS20.